The primary structure comprises 298 residues: Lipoyl synthase (298 aa).

7 residues coordinate [4Fe-4S] cluster: C40, C45, C51, C67, C71, C74, and S280. The Radical SAM core domain occupies 53–269 (AVRRTATFMI…KEIAMQKGFS (217 aa)).

The protein belongs to the radical SAM superfamily. Lipoyl synthase family. [4Fe-4S] cluster serves as cofactor.

The protein localises to the cytoplasm. It catalyses the reaction [[Fe-S] cluster scaffold protein carrying a second [4Fe-4S](2+) cluster] + N(6)-octanoyl-L-lysyl-[protein] + 2 oxidized [2Fe-2S]-[ferredoxin] + 2 S-adenosyl-L-methionine + 4 H(+) = [[Fe-S] cluster scaffold protein] + N(6)-[(R)-dihydrolipoyl]-L-lysyl-[protein] + 4 Fe(3+) + 2 hydrogen sulfide + 2 5'-deoxyadenosine + 2 L-methionine + 2 reduced [2Fe-2S]-[ferredoxin]. Its pathway is protein modification; protein lipoylation via endogenous pathway; protein N(6)-(lipoyl)lysine from octanoyl-[acyl-carrier-protein]. Catalyzes the radical-mediated insertion of two sulfur atoms into the C-6 and C-8 positions of the octanoyl moiety bound to the lipoyl domains of lipoate-dependent enzymes, thereby converting the octanoylated domains into lipoylated derivatives. The protein is Lipoyl synthase of Bacillus velezensis (strain DSM 23117 / BGSC 10A6 / LMG 26770 / FZB42) (Bacillus amyloliquefaciens subsp. plantarum).